A 115-amino-acid chain; its full sequence is NADH-ubiquinone oxidoreductase chain 3 (115 aa).

The next 3 helical transmembrane spans lie at 4 to 24 (LITMTVNSALSFCLISIAFWL), 55 to 75 (FFLVGITFLLFDLEIALLLPL), and 87 to 107 (TMMVSFMFVSILALGLAYEWL).

Belongs to the complex I subunit 3 family. Core subunit of respiratory chain NADH dehydrogenase (Complex I) which is composed of 45 different subunits. Interacts with TMEM186. Interacts with TMEM242.

The protein resides in the mitochondrion inner membrane. The enzyme catalyses a ubiquinone + NADH + 5 H(+)(in) = a ubiquinol + NAD(+) + 4 H(+)(out). Core subunit of the mitochondrial membrane respiratory chain NADH dehydrogenase (Complex I) which catalyzes electron transfer from NADH through the respiratory chain, using ubiquinone as an electron acceptor. Essential for the catalytic activity of complex I. In Notiomys edwardsii (Edwards's long-clawed mouse), this protein is NADH-ubiquinone oxidoreductase chain 3.